Consider the following 338-residue polypeptide: Lipoate-protein ligase A (338 aa).

Residues 29–216 (PATQRVLFLW…AFFVHYGERV (188 aa)) enclose the BPL/LPL catalytic domain. ATP-binding positions include Arg71, 76–79 (GAVF), and Lys134. Lys134 is a (R)-lipoate binding site.

The protein belongs to the LplA family. In terms of assembly, monomer.

It localises to the cytoplasm. It carries out the reaction L-lysyl-[lipoyl-carrier protein] + (R)-lipoate + ATP = N(6)-[(R)-lipoyl]-L-lysyl-[lipoyl-carrier protein] + AMP + diphosphate + H(+). Its pathway is protein modification; protein lipoylation via exogenous pathway; protein N(6)-(lipoyl)lysine from lipoate: step 1/2. The protein operates within protein modification; protein lipoylation via exogenous pathway; protein N(6)-(lipoyl)lysine from lipoate: step 2/2. In terms of biological role, catalyzes both the ATP-dependent activation of exogenously supplied lipoate to lipoyl-AMP and the transfer of the activated lipoyl onto the lipoyl domains of lipoate-dependent enzymes. The sequence is that of Lipoate-protein ligase A from Salmonella newport (strain SL254).